The chain runs to 377 residues: Probable isocitrate dehydrogenase [NAD] subunit alpha, mitochondrial (377 aa).

Positions 131, 141, 162, and 249 each coordinate substrate. Mg(2+)-binding residues include Asp249, Asp273, and Asp277.

It belongs to the isocitrate and isopropylmalate dehydrogenases family. In terms of assembly, heterooligomer of subunits alpha, beta, and gamma in the apparent ratio of 2:1:1. Requires Mg(2+) as cofactor. The cofactor is Mn(2+).

The protein localises to the mitochondrion. The catalysed reaction is D-threo-isocitrate + NAD(+) = 2-oxoglutarate + CO2 + NADH. Its function is as follows. Probable catalytic subunit of the enzyme which catalyzes the decarboxylation of isocitrate (ICT) into alpha-ketoglutarate. The chain is Probable isocitrate dehydrogenase [NAD] subunit alpha, mitochondrial from Drosophila melanogaster (Fruit fly).